The sequence spans 339 residues: Delta(9)-fatty-acid desaturase fat-6 (339 aa).

The next 4 helical transmembrane spans lie at 52-72 (VALF…LIFE), 77-97 (TVIF…AGAH), 195-215 (YFPL…VYFW), and 219-241 (AFIA…TWCI).

The protein belongs to the fatty acid desaturase type 1 family. Expressed in the intestine in adult worms and in all four larval stages. Additional expression in the hypodermis in all life stages.

The protein localises to the membrane. It carries out the reaction octadecanoyl-CoA + 2 Fe(II)-[cytochrome b5] + O2 + 2 H(+) = (9Z)-octadecenoyl-CoA + 2 Fe(III)-[cytochrome b5] + 2 H2O. The catalysed reaction is hexadecanoyl-CoA + 2 Fe(II)-[cytochrome b5] + O2 + 2 H(+) = (9Z)-hexadecenoyl-CoA + 2 Fe(III)-[cytochrome b5] + 2 H2O. It catalyses the reaction heptadecanoyl-CoA + 2 Fe(II)-[cytochrome b5] + O2 + 2 H(+) = (9Z)-heptadecenoyl-CoA + 2 Fe(III)-[cytochrome b5] + 2 H2O. The enzyme catalyses (11E)-octadecenoyl-CoA + 2 Fe(II)-[cytochrome b5] + O2 + 2 H(+) = (9Z,11E)-octadecadienoyl-CoA + 2 Fe(III)-[cytochrome b5] + 2 H2O. It participates in lipid metabolism; monounsaturated fatty acid biosynthesis. The protein operates within lipid metabolism; fatty acid metabolism. Functionally, delta(9)-fatty acid desaturase that acts preferentially on stearoyl-CoA (octadecanoyl-CoA) producing the monounsaturated oleoyl-CoA ((9Z)-octadecenoyl-CoA), one of the most abundant monounsaturated fatty acid in Caenorhabditis elegans phospholipids and triacylglycerols. Also acts on palmitoyl-CoA (hexadecanoyl-CoA), heptadecanoyl-CoA and (11E)-octadecenoyl-CoA (trans-vaccenoyl-CoA), the monounsaturated fatty acids (MUFAs) produced are further used as substrates to synthesize polyunsaturated fatty acids (PUFAs) by several other desaturases and elongases. Unlike plants, Caenorhabditis elegans desaturases seem to use fatty acyl-CoAs as substrates. This is Delta(9)-fatty-acid desaturase fat-6 (fat-6) from Caenorhabditis elegans.